A 377-amino-acid chain; its full sequence is Homoserine O-succinyltransferase (377 aa).

Residues 45–356 (NAVLVCHALN…PHGHDAFLLD (312 aa)) form the AB hydrolase-1 domain. The Nucleophile role is filled by S151. A substrate-binding site is contributed by R221. Active-site residues include D317 and H350. D351 lines the substrate pocket.

This sequence belongs to the AB hydrolase superfamily. MetX family. In terms of assembly, homodimer.

The protein localises to the cytoplasm. The catalysed reaction is L-homoserine + succinyl-CoA = O-succinyl-L-homoserine + CoA. It participates in amino-acid biosynthesis; L-methionine biosynthesis via de novo pathway; O-succinyl-L-homoserine from L-homoserine: step 1/1. Functionally, transfers a succinyl group from succinyl-CoA to L-homoserine, forming succinyl-L-homoserine. The protein is Homoserine O-succinyltransferase of Leptothrix cholodnii (strain ATCC 51168 / LMG 8142 / SP-6) (Leptothrix discophora (strain SP-6)).